Consider the following 1648-residue polypeptide: Cortactin-binding protein 2 (1648 aa).

Disordered stretches follow at residues 1 to 26 (MATD…TAEA), 200 to 250 (EEKK…EEAH), 322 to 439 (PLTV…PGLN), 451 to 476 (GNAN…PTSR), and 492 to 608 (ALSR…PSID). The stretch at 119–274 (KMQERMSAQL…MEQMKKGSDG (156 aa)) forms a coiled coil. Basic and acidic residues-rich tracts occupy residues 200 to 218 (EEKK…EKQR) and 225 to 250 (QLEK…EEAH). Composition is skewed to polar residues over residues 330–342 (STGS…NTKG) and 372–392 (LPSS…APDL). The segment covering 393 to 415 (SNSTPSTPSSTAPAAAQTPGTAP) has biased composition (low complexity). Over residues 492-503 (ALSRFTSPQAGA) the composition is skewed to polar residues. R495 carries the post-translational modification Asymmetric dimethylarginine. ANK repeat units lie at residues 699-729 (GRPT…DINY), 733-762 (DGHS…RVDA), 766-795 (NGFT…NINH), 799-828 (GGQT…DRSI), 832-861 (DGWT…RAHG), and 901-931 (EGWT…EPER). Residues 1438–1492 (SGAWRKVNTSPRKKPGHFSSPTWNKPDPKREGMRNKTIPHLNTNRNSSLSKQQSL) are disordered. A compositionally biased stretch (polar residues) spans 1477–1492 (HLNTNRNSSLSKQQSL). Position 1510 is a phosphoserine (S1510). The tract at residues 1522-1648 (SMCSSKSESD…KHEQVEKPNK (127 aa)) is disordered. The span at 1528–1547 (SESDISKIADSRDDLRKFDS) shows a compositional bias: basic and acidic residues. 2 stretches are compositionally biased toward polar residues: residues 1548 to 1557 (SRTNPGTSAP) and 1571 to 1584 (PPSS…SNSK). Over residues 1609 to 1623 (SQNTKRNSSSSNTRQ) the composition is skewed to low complexity. Residues 1630 to 1648 (SKEENWTLDKHEQVEKPNK) are compositionally biased toward basic and acidic residues.

Interacts with CTTN/cortactin SH3 domain. Interacts with STRN, STRN4/zinedin and MOB4/phocein; this interactions mediate the association with the STRIPAK core complex and may regulate dendritic spine distribution of the STRIPAK complex in hippocampal neurons. Activation of glutamate receptors weakens the interaction with STRN and STRN4. Isoform 2 is predominantly expressed in brain (at protein level). In the brain, expressed at high levels in hypothalamus and striatum and at lower levels in cerebellum and cortex.

The protein localises to the cytoplasm. Its subcellular location is the cell cortex. It localises to the cell projection. The protein resides in the dendritic spine. Functionally, regulates the dendritic spine distribution of CTTN/cortactin in hippocampal neurons, and thus controls dendritic spinogenesis and dendritic spine maintenance. Associates with the striatin-interacting phosphatase and kinase (STRIPAK) core complex to regulate dendritic spine distribution of the STRIPAK complex in hippocampal neurons. This Mus musculus (Mouse) protein is Cortactin-binding protein 2 (Cttnbp2).